The following is a 384-amino-acid chain: Farnesyl pyrophosphate synthase 1, mitochondrial (384 aa).

Isopentenyl diphosphate contacts are provided by lysine 89, arginine 92, and glutamine 128. The Mg(2+) site is built by aspartate 135 and aspartate 139. Residue arginine 144 coordinates dimethylallyl diphosphate. Arginine 145 serves as a coordination point for isopentenyl diphosphate. 5 residues coordinate dimethylallyl diphosphate: lysine 232, threonine 233, glutamine 271, lysine 288, and lysine 297.

This sequence belongs to the FPP/GGPP synthase family. Mg(2+) is required as a cofactor. In terms of tissue distribution, the FPS1L mRNA accumulates preferentially in inflorescences, whereas the FPS1S mRNA is predominantly expressed in roots and inflorescences.

Its subcellular location is the mitochondrion. It is found in the cytoplasm. The enzyme catalyses isopentenyl diphosphate + dimethylallyl diphosphate = (2E)-geranyl diphosphate + diphosphate. It catalyses the reaction isopentenyl diphosphate + (2E)-geranyl diphosphate = (2E,6E)-farnesyl diphosphate + diphosphate. Its pathway is isoprenoid biosynthesis; farnesyl diphosphate biosynthesis; farnesyl diphosphate from geranyl diphosphate and isopentenyl diphosphate: step 1/1. The protein operates within isoprenoid biosynthesis; geranyl diphosphate biosynthesis; geranyl diphosphate from dimethylallyl diphosphate and isopentenyl diphosphate: step 1/1. Catalyzes the sequential condensation of isopentenyl pyrophosphate with the allylic pyrophosphates, dimethylallyl pyrophosphate, and then with the resultant geranylpyrophosphate to the ultimate product farnesyl pyrophosphate. The chain is Farnesyl pyrophosphate synthase 1, mitochondrial (FPS1) from Arabidopsis thaliana (Mouse-ear cress).